Consider the following 233-residue polypeptide: C-type lectin domain-containing protein 87 (233 aa).

A signal peptide spans 1–20 (MRFFRFLVFPVIAGLSSVLA). N-linked (GlcNAc...) asparagine glycosylation occurs at Asn26. Ser32 carries an O-linked (Xyl...) (chondroitin sulfate) serine glycan. An N-linked (GlcNAc...) asparagine glycan is attached at Asn81. The C-type lectin domain maps to 93–223 (FADSCYWIET…CTYLLYSICE (131 aa)). 2 disulfide bridges follow: Cys114/Cys222 and Cys193/Cys214. The N-linked (GlcNAc...) asparagine glycan is linked to Asn225.

This chain is C-type lectin domain-containing protein 87, found in Caenorhabditis briggsae.